Reading from the N-terminus, the 614-residue chain is UPF0329 protein ECU03_0090 (614 aa).

Basic and acidic residues-rich tracts occupy residues 317 to 338 (EREE…EESL) and 345 to 354 (LRMEEKEKSK). A disordered region spans residues 317-420 (EREEAEKMRG…KKSRSKGHRY (104 aa)). Basic residues predominate over residues 355 to 364 (SRGKKKKGGK). Residues 372–381 (AKMEEEKKDS) show a composition bias toward basic and acidic residues. Positions 382–394 (EEVEESAEAEVSL) are enriched in acidic residues. Basic residues predominate over residues 408–420 (SSKKKSRSKGHRY).

The protein belongs to the UPF0329 family.

The polypeptide is UPF0329 protein ECU03_0090 (Encephalitozoon cuniculi (strain GB-M1) (Microsporidian parasite)).